The sequence spans 312 residues: Dipeptide transport ATP-binding protein DppF (312 aa).

The 246-residue stretch at 10-255 (IKNLDLTFNK…PIHPYTKSLL (246 aa)) folds into the ABC transporter domain. 45–52 (GESGSGKT) serves as a coordination point for ATP.

The protein belongs to the ABC transporter superfamily. The complex is composed of two ATP-binding proteins (DppD and DppF), two transmembrane proteins (DppB and DppC) and a solute-binding protein (DppA).

The protein localises to the cell membrane. The catalysed reaction is a dipeptide(out) + ATP + H2O = a dipeptide(in) + ADP + phosphate + H(+). Part of the ABC transporter DppABCDF involved in dipeptide transport. Responsible for energy coupling to the transport system. This chain is Dipeptide transport ATP-binding protein DppF, found in Lactococcus lactis subsp. cremoris (strain MG1363).